The sequence spans 173 residues: Small ribosomal subunit protein uS9 (173 aa).

Over residues 1 to 15 (MTDTPTENLENTEVT) the composition is skewed to polar residues. Disordered regions lie at residues 1-26 (MTDTPTENLENTEVTPFTEGDREIAY) and 135-173 (EASRPALKKAGMLTRDARVKERKKAGLKKARKAPQYSKR). A compositionally biased stretch (basic residues) spans 154 to 173 (KERKKAGLKKARKAPQYSKR).

The protein belongs to the universal ribosomal protein uS9 family.

The polypeptide is Small ribosomal subunit protein uS9 (Cutibacterium acnes (strain DSM 16379 / KPA171202) (Propionibacterium acnes)).